Reading from the N-terminus, the 88-residue chain is Conotoxin MaIr34 (88 aa).

The signal sequence occupies residues 1–21 (MKLTCVIVAVLFLTAWTFVMA). Residues 22-53 (DDPRDGPDTAVRGGKRFWKARNEMNSAASKLN) constitute a propeptide that is removed on maturation. 3 disulfide bridges follow: C57/C75, C64/C79, and C74/C83.

Belongs to the conotoxin O1 superfamily. Expressed by the venom duct.

It is found in the secreted. This Conus marmoreus (Marble cone) protein is Conotoxin MaIr34.